A 349-amino-acid chain; its full sequence is D-arabinitol dehydrogenase 1 (349 aa).

Residues Cys46, His67, Cys97, Cys100, Cys103, Cys111, and Glu151 each coordinate Zn(2+).

This sequence belongs to the zinc-containing alcohol dehydrogenase family. Zn(2+) serves as cofactor.

It localises to the cell projection. The catalysed reaction is D-arabinitol + NADP(+) = D-xylulose + NADPH + H(+). It carries out the reaction D-arabinitol + NADP(+) = D-ribulose + NADPH + H(+). Its function is as follows. D-arabinitol dehydrogenase which mostly produces D-arabinitol in haustoria, the appendages of the parasitic fungus that penetrate the host's tissue and draws nutrients from it. D-arabinitol accumulation may serve as a carbohydrate storage compound. D-arabinitol is also capable of quenching reactive oxygen species involved in host plant defense reactions, thus providing protection for the rust fungus during the pathogenic interaction. In Uromyces fabae (Rust fungus), this protein is D-arabinitol dehydrogenase 1 (ARD1).